The sequence spans 138 residues: Host cell factor C1 regulator 1 (138 aa).

The interaction with HCFC1 stretch occupies residues 76–79 (DHPY). The Nuclear export signal motif lies at 110–119 (IPEALRLLRL).

As to quaternary structure, interacts with HCFC1. In terms of tissue distribution, widely expressed.

It is found in the cytoplasm. It localises to the nucleus. Regulates HCFC1 activity by modulating its subcellular localization. Overexpression of HCFC1R1 leads to accumulation of HCFC1 in the cytoplasm. HCFC1R1-mediated export may provide the pool of cytoplasmic HCFC1 required for import of virion-derived VP16 into the nucleus. The chain is Host cell factor C1 regulator 1 (HCFC1R1) from Homo sapiens (Human).